Reading from the N-terminus, the 352-residue chain is Alanine racemase (352 aa).

The active-site Proton acceptor; specific for D-alanine is the Lys-33. The residue at position 33 (Lys-33) is an N6-(pyridoxal phosphate)lysine. Arg-129 is a binding site for substrate. Tyr-250 acts as the Proton acceptor; specific for L-alanine in catalysis. Met-298 lines the substrate pocket.

Belongs to the alanine racemase family. Pyridoxal 5'-phosphate is required as a cofactor.

It carries out the reaction L-alanine = D-alanine. It functions in the pathway amino-acid biosynthesis; D-alanine biosynthesis; D-alanine from L-alanine: step 1/1. Functionally, catalyzes the interconversion of L-alanine and D-alanine. May also act on other amino acids. The protein is Alanine racemase (alr) of Neisseria meningitidis serogroup C / serotype 2a (strain ATCC 700532 / DSM 15464 / FAM18).